The primary structure comprises 397 residues: 4-hydroxyphenylpyruvate dioxygenase (397 aa).

VOC domains follow at residues 18-149 (NFHH…FVEY) and 181-339 (FIDH…IFTK). Fe cation contacts are provided by His184, His267, and Glu350.

It belongs to the 4HPPD family. In terms of assembly, homodimer. It depends on Fe cation as a cofactor.

It is found in the cytoplasm. The protein localises to the endoplasmic reticulum membrane. Its subcellular location is the golgi apparatus membrane. The enzyme catalyses 3-(4-hydroxyphenyl)pyruvate + O2 = homogentisate + CO2. It functions in the pathway amino-acid degradation; L-phenylalanine degradation; acetoacetate and fumarate from L-phenylalanine: step 3/6. Its function is as follows. Catalyzes the conversion of 4-hydroxyphenylpyruvic acid to homogentisic acid, one of the steps in tyrosine catabolism. This is 4-hydroxyphenylpyruvate dioxygenase (hpd) from Danio rerio (Zebrafish).